The sequence spans 353 residues: MTAILERRESTSLWGRFCNWITSTENRLYIGWFGVLMIPTLLTATSVFIIAFIAAPPVDIDGIREPVSGSLLYGNNIISGAIIPTSAAIGLHFYPIWEAASVDEWLYNGGPYELIVLHFLLGVACYMGREWELSFRLGMRPWIAVAYSAPVAAATAVFLIYPIGQGSFSDGMPLGISGTFNFMIVFQAEHNILMHPFHMLGVAGVFGGSLFSAMHGSLVTSSLIRETTENESANEGYKFGQEEETYNIVAAHGYFGRLIFQYASFNNSRSLHFFLAAWPVVGIWFTALGISTMAFNLNGFNFNQSVVDSQGRVINTWADIINRANLGMEVMHERNAHNFPLDLAAVEVPSING.

Thr-2 carries the post-translational modification N-acetylthreonine. Phosphothreonine is present on Thr-2. Transmembrane regions (helical) follow at residues 29–46 (YIGW…TATS), 118–133 (HFLL…EWEL), and 142–156 (WIAV…AATA). Residue His-118 coordinates chlorophyll a. Tyr-126 is a binding site for pheophytin a. [CaMn4O5] cluster is bound by residues Asp-170 and Glu-189. Residues 197 to 218 (FHMLGVAGVFGGSLFSAMHGSL) traverse the membrane as a helical segment. Residue His-198 participates in chlorophyll a binding. Residues His-215 and 264–265 (SF) each bind a quinone. His-215 is a Fe cation binding site. Residue His-272 participates in Fe cation binding. A helical membrane pass occupies residues 274–288 (FLAAWPVVGIWFTAL). Positions 332, 333, 342, and 344 each coordinate [CaMn4O5] cluster. Residues 345-353 (AVEVPSING) constitute a propeptide that is removed on maturation.

The protein belongs to the reaction center PufL/M/PsbA/D family. As to quaternary structure, PSII is composed of 1 copy each of membrane proteins PsbA, PsbB, PsbC, PsbD, PsbE, PsbF, PsbH, PsbI, PsbJ, PsbK, PsbL, PsbM, PsbT, PsbX, PsbY, PsbZ, Psb30/Ycf12, at least 3 peripheral proteins of the oxygen-evolving complex and a large number of cofactors. It forms dimeric complexes. Requires The D1/D2 heterodimer binds P680, chlorophylls that are the primary electron donor of PSII, and subsequent electron acceptors. It shares a non-heme iron and each subunit binds pheophytin, quinone, additional chlorophylls, carotenoids and lipids. D1 provides most of the ligands for the Mn4-Ca-O5 cluster of the oxygen-evolving complex (OEC). There is also a Cl(-1) ion associated with D1 and D2, which is required for oxygen evolution. The PSII complex binds additional chlorophylls, carotenoids and specific lipids. as cofactor. Post-translationally, tyr-161 forms a radical intermediate that is referred to as redox-active TyrZ, YZ or Y-Z. In terms of processing, C-terminally processed by CTPA; processing is essential to allow assembly of the oxygen-evolving complex and thus photosynthetic growth.

Its subcellular location is the plastid. The protein resides in the chloroplast thylakoid membrane. It carries out the reaction 2 a plastoquinone + 4 hnu + 2 H2O = 2 a plastoquinol + O2. In terms of biological role, photosystem II (PSII) is a light-driven water:plastoquinone oxidoreductase that uses light energy to abstract electrons from H(2)O, generating O(2) and a proton gradient subsequently used for ATP formation. It consists of a core antenna complex that captures photons, and an electron transfer chain that converts photonic excitation into a charge separation. The D1/D2 (PsbA/PsbD) reaction center heterodimer binds P680, the primary electron donor of PSII as well as several subsequent electron acceptors. This is Photosystem II protein D1 from Triticum aestivum (Wheat).